Here is a 98-residue protein sequence, read N- to C-terminus: 10 kDa chaperonin, mitochondrial (98 aa).

The transit peptide at methionine 1–valine 17 directs the protein to the mitochondrion. The interval isoleucine 18 to threonine 94 is cpn-10 domain.

The protein belongs to the GroES chaperonin family. In terms of assembly, forms stable complexes with CPN60 in the presence of ATP.

It is found in the mitochondrion. Its function is as follows. Seems to function only as a co-chaperone, along with CPN60, and in certain cases is essential for the discharge of biologically active proteins from CPN60. This is 10 kDa chaperonin, mitochondrial (CPN10) from Arabidopsis thaliana (Mouse-ear cress).